The chain runs to 472 residues: Serine incorporator 3 (472 aa).

Topologically, residues 1 to 96 are extracellular; the sequence is MGAVLGVFSL…KDCDVLVGFK (96 aa). N-linked (GlcNAc...) asparagine glycosylation occurs at asparagine 34. Residues 97–117 traverse the membrane as a helical segment; the sequence is AVYRINFAVAIFFFAFFLLML. Topologically, residues 118–132 are cytoplasmic; sequence KVKTSKDPRAAVHNG. The helical transmembrane segment at 133–153 threads the bilayer; that stretch reads FWFFKIAAIIGIMIGSFYIPG. Topologically, residues 154–158 are extracellular; sequence GSFTE. The helical transmembrane segment at 159-179 threads the bilayer; sequence VWFVAGMLGASFFIIIQLVLL. Residues 180–206 lie on the Cytoplasmic side of the membrane; that stretch reads VDMAHSWNELWVNRMEEGNPRLWYAAL. The helical transmembrane segment at 207–227 threads the bilayer; it reads LSFTSLFYILSIVFAALLYVF. The Extracellular portion of the chain corresponds to 228 to 238; it reads YTKPDDCTENK. The chain crosses the membrane as a helical span at residues 239 to 259; it reads VFISLNLIFCVAVSIVSILPK. Topologically, residues 260 to 329 are cytoplasmic; sequence VQEHQPRSGL…APAYAPPSQS (70 aa). A helical transmembrane segment spans residues 330–350; it reads GHFMNLDDIWGLIIFVFCLIY. The Extracellular portion of the chain corresponds to 351–405; sequence SSFRTSSNSQVNKLTLSGSDSVILGDTTNGANDEEDGQPRRAVDNEKEGVQYSYS. Position 371 is a phosphoserine (serine 371). A helical transmembrane segment spans residues 406-426; it reads FFHLMLCCASLYIMMTITSWY. The Cytoplasmic portion of the chain corresponds to 427 to 445; sequence SPDAKFQKVSSKWLAVWFK. The helical transmembrane segment at 446 to 466 threads the bilayer; the sequence is MGSSWLCLLLYLWTLVAPLVL. The Extracellular segment spans residues 467-472; it reads TGRDFS.

The protein belongs to the TDE1 family. In terms of processing, N-glycosylated. As to expression, highly expressed in the neuronal populations such as Purkinje cells in the cerebellum, brainstem and spinal motor neurons, locus coeruleus and raphe nuclei. Highly expressed also in thymus, kidney liver and testis.

Its subcellular location is the cell membrane. The protein localises to the golgi apparatus membrane. It carries out the reaction a 1,2-diacyl-sn-glycero-3-phospho-L-serine(in) = a 1,2-diacyl-sn-glycero-3-phospho-L-serine(out). The enzyme catalyses a 1,2-diacyl-sn-glycero-3-phosphocholine(in) = a 1,2-diacyl-sn-glycero-3-phosphocholine(out). It catalyses the reaction a 1,2-diacyl-sn-glycero-3-phosphoethanolamine(in) = a 1,2-diacyl-sn-glycero-3-phosphoethanolamine(out). Functionally, restriction factor required to restrict infectivity of gammaretroviruses: acts by inhibiting an early step of viral infection. Impairs the penetration of the viral particle into the cytoplasm. Non-ATP-dependent, non-specific lipid transporter for phosphatidylserine, phosphatidylcholine, and phosphatidylethanolamine. Functions as a scramblase that flips lipids in both directions across the membrane. Phospholipid scrambling results in gammaretroviral surface exposure of phosphatidylserine and loss of membrane asymmetry, which leads to loss of infectivity. The chain is Serine incorporator 3 (Serinc3) from Mus musculus (Mouse).